The sequence spans 49 residues: Lectin alpha chain (49 aa).

This sequence belongs to the leguminous lectin family. Homotetramer. In terms of processing, the beta and gamma chains are produced by partial proteolytic processing of the lectin alpha chain by an asparaginyl endopeptidase. Mixture of 60% alpha lectin and 40% of its beta and gamma proteolytic fragments. As to expression, seed.

Its function is as follows. D-mannose/D-glucose-binding lectin. This is Lectin alpha chain from Dioclea violacea.